Here is a 911-residue protein sequence, read N- to C-terminus: Probable dipeptidyl-aminopeptidase B (911 aa).

The interval 1–39 (MPRPRAAKEEETELLAQHQESPRPSSDGSEASASSISTT) is disordered. Residues 1–97 (MPRPRAAKEE…TPVDKKARRT (97 aa)) lie on the Cytoplasmic side of the membrane. The span at 25-39 (SSDGSEASASSISTT) shows a compositional bias: low complexity. The chain crosses the membrane as a helical; Signal-anchor for type II membrane protein span at residues 98-118 (LWIVGTICAVGWALALVSFLM). The Vacuolar segment spans residues 119-911 (NGNYKHSSTR…AQADARSLGR (793 aa)). N-linked (GlcNAc...) asparagine glycosylation is found at N268 and N564. S755 serves as the catalytic Charge relay system. N809 carries N-linked (GlcNAc...) asparagine glycosylation. Catalysis depends on charge relay system residues D832 and H865.

This sequence belongs to the peptidase S9B family.

Its subcellular location is the vacuole membrane. It catalyses the reaction Release of an N-terminal dipeptide, Xaa-Yaa-|-Zaa-, from a polypeptide, preferentially when Yaa is Pro, provided Zaa is neither Pro nor hydroxyproline.. In terms of biological role, type IV dipeptidyl-peptidase which removes N-terminal dipeptides sequentially from polypeptides having unsubstituted N-termini provided that the penultimate residue is proline. This is Probable dipeptidyl-aminopeptidase B (DAPB) from Phaeosphaeria nodorum (strain SN15 / ATCC MYA-4574 / FGSC 10173) (Glume blotch fungus).